Consider the following 176-residue polypeptide: Ribosome maturation factor RimM (176 aa).

The 76-residue stretch at 99-174 (KDEFYVRDLI…IVLIQPELWN (76 aa)) folds into the PRC barrel domain.

This sequence belongs to the RimM family. As to quaternary structure, binds ribosomal protein uS19.

Its subcellular location is the cytoplasm. In terms of biological role, an accessory protein needed during the final step in the assembly of 30S ribosomal subunit, possibly for assembly of the head region. Essential for efficient processing of 16S rRNA. May be needed both before and after RbfA during the maturation of 16S rRNA. It has affinity for free ribosomal 30S subunits but not for 70S ribosomes. This chain is Ribosome maturation factor RimM, found in Leptospira borgpetersenii serovar Hardjo-bovis (strain JB197).